The primary structure comprises 1167 residues: ATP-dependent helicase/nuclease subunit A (1167 aa).

The UvrD-like helicase ATP-binding domain occupies 2-451; sequence KNWTAEQMRA…IELSLNFRSR (450 aa). 23 to 30 provides a ligand contact to ATP; that stretch reads AAAGAGKT. The UvrD-like helicase C-terminal domain occupies 478–768; sequence KAFLKKGADY…RVMSVHKSKG (291 aa).

Belongs to the helicase family. AddA subfamily. In terms of assembly, heterodimer of AddA and AddB/RexB. Mg(2+) is required as a cofactor.

The enzyme catalyses Couples ATP hydrolysis with the unwinding of duplex DNA by translocating in the 3'-5' direction.. It catalyses the reaction ATP + H2O = ADP + phosphate + H(+). Its function is as follows. The heterodimer acts as both an ATP-dependent DNA helicase and an ATP-dependent, dual-direction single-stranded exonuclease. Recognizes the chi site generating a DNA molecule suitable for the initiation of homologous recombination. The AddA nuclease domain is required for chi fragment generation; this subunit has the helicase and 3' -&gt; 5' nuclease activities. The polypeptide is ATP-dependent helicase/nuclease subunit A (Carboxydothermus hydrogenoformans (strain ATCC BAA-161 / DSM 6008 / Z-2901)).